Reading from the N-terminus, the 149-residue chain is Ribosomal RNA large subunit methyltransferase H (149 aa).

Residues L71, G98, and 117–122 (LSKMTL) each bind S-adenosyl-L-methionine.

This sequence belongs to the RNA methyltransferase RlmH family. Homodimer.

It localises to the cytoplasm. The catalysed reaction is pseudouridine(1915) in 23S rRNA + S-adenosyl-L-methionine = N(3)-methylpseudouridine(1915) in 23S rRNA + S-adenosyl-L-homocysteine + H(+). In terms of biological role, specifically methylates the pseudouridine at position 1915 (m3Psi1915) in 23S rRNA. The sequence is that of Ribosomal RNA large subunit methyltransferase H from Campylobacter fetus subsp. fetus (strain 82-40).